The primary structure comprises 356 residues: S-adenosylmethionine:tRNA ribosyltransferase-isomerase (356 aa).

It belongs to the QueA family. As to quaternary structure, monomer.

Its subcellular location is the cytoplasm. It carries out the reaction 7-aminomethyl-7-carbaguanosine(34) in tRNA + S-adenosyl-L-methionine = epoxyqueuosine(34) in tRNA + adenine + L-methionine + 2 H(+). The protein operates within tRNA modification; tRNA-queuosine biosynthesis. In terms of biological role, transfers and isomerizes the ribose moiety from AdoMet to the 7-aminomethyl group of 7-deazaguanine (preQ1-tRNA) to give epoxyqueuosine (oQ-tRNA). The protein is S-adenosylmethionine:tRNA ribosyltransferase-isomerase of Xanthomonas campestris pv. campestris (strain 8004).